The following is a 745-amino-acid chain: Fatty acid oxidation complex subunit alpha (745 aa).

An enoyl-CoA hydratase region spans residues 47–209 (VNTLKAKFAE…KMGLVDDVVP (163 aa)). The segment at 325–745 (RAIHRVGVLG…LDEAAITAHN (421 aa)) is 3-hydroxyacyl-CoA dehydrogenase.

This sequence in the N-terminal section; belongs to the enoyl-CoA hydratase/isomerase family. In the central section; belongs to the 3-hydroxyacyl-CoA dehydrogenase family. Heterotetramer of two alpha chains (FadJ) and two beta chains (FadI).

The protein localises to the cytoplasm. It catalyses the reaction a (3S)-3-hydroxyacyl-CoA = a (2E)-enoyl-CoA + H2O. The catalysed reaction is a 4-saturated-(3S)-3-hydroxyacyl-CoA = a (3E)-enoyl-CoA + H2O. The enzyme catalyses a (3S)-3-hydroxyacyl-CoA + NAD(+) = a 3-oxoacyl-CoA + NADH + H(+). It carries out the reaction (3S)-3-hydroxybutanoyl-CoA = (3R)-3-hydroxybutanoyl-CoA. The protein operates within lipid metabolism; fatty acid beta-oxidation. Functionally, catalyzes the formation of a hydroxyacyl-CoA by addition of water on enoyl-CoA. Also exhibits 3-hydroxyacyl-CoA epimerase and 3-hydroxyacyl-CoA dehydrogenase activities. This chain is Fatty acid oxidation complex subunit alpha, found in Yersinia enterocolitica serotype O:8 / biotype 1B (strain NCTC 13174 / 8081).